A 763-amino-acid polypeptide reads, in one-letter code: MSELLSVALFLASVLIYAWKAGRNTWWFAATLTVLGLFVILNITLYASDYFTGDGINDAVLYTLTNSLTGAGVGKYILPGIGIALALVAVFGALGWVLRRRRHHPHHVGYSLLALLLALGSVDASPAFRQITELVKSQMRDGDPDFAVYYKEPAKTIPHPKLNLVYIYGESLERTYFDNDAFPNLTPELGALKNEGLDFSHTMQLPGTDYTIAGMVASQCGIPLFAPFEGNASASVSSFFPQNICLGDILKNSGYQNYFVQGANLRFAGKDVFLKSHGFDHLYGAEELKTVVADPSYRNDWGFYDDTVLDEAWKKFEALSRSGQRFSLFTLTVDTHHPDGFISRTCNRKRYDYDGKPNQSFSTVSCSQENIAEFINKIKASPWFKDTVIVVSSDHLAMNNTAWKYLNKQDRNNLFFILRGDKPQQETLAVKRNTMDNGATVLDILGGDNFIGLGRSSLSGQSLSEVFLNVKEKVLAMKPDIIRLWNFPKEIKDFTVDRDKNMIAFSGSHFRLPLLLRVSDKRVEPLPESEYSAPLRFQLADFAPRDNFVWIDRCYKMAQLWAPALALSTDWCVSQGQLGGQQTVQHVDKAQWQGKTAFKDTMIDMERYKGNVDTLKIVDNDIRYKADSFIFNVAGAPEEVKQFSGISRPESWGRWSNAQLGDEVKIEYKAPLPKKFDLVITAKAFGDNANRPIPVRVGNEEQTLVLGHDVSTITLHFNNPTDANTLVIAPPAPVSTNEGNILGHSPRKLGIGMVEIKVVNVES.

4 helical membrane passes run 4 to 19, 26 to 48, 76 to 98, and 110 to 132; these read LLSV…IYAW, WWFA…LYAS, YILP…GWVL, and YSLL…RQIT.

Belongs to the OpgB family.

The protein localises to the cell inner membrane. It carries out the reaction a phosphatidylglycerol + a membrane-derived-oligosaccharide D-glucose = a 1,2-diacyl-sn-glycerol + a membrane-derived-oligosaccharide 6-(glycerophospho)-D-glucose.. Its pathway is glycan metabolism; osmoregulated periplasmic glucan (OPG) biosynthesis. Functionally, transfers a phosphoglycerol residue from phosphatidylglycerol to the membrane-bound nascent glucan backbones. This is Phosphoglycerol transferase I from Salmonella typhi.